We begin with the raw amino-acid sequence, 315 residues long: 1,2-dihydroxy-3,5-cyclohexadiene-1,4-dicarboxylate dehydrogenase (315 aa).

Histidine 159, histidine 203, and histidine 255 together coordinate a divalent metal cation.

It belongs to the PdxA family.

It carries out the reaction (3S,4R)-3,4-dihydroxycyclohexa-1,5-diene-1,4-dicarboxylate + NAD(+) = 3,4-dihydroxybenzoate + CO2 + NADH. In terms of biological role, involved in the degradation of terephthalate (TPA) via the protocatechuate (PCA) 4,5-cleavage pathway. Catalyzes the dehydrogenation of 1,2-dihydroxy-3,5-cyclohexadiene-1,4-dicarboxylate (DCD) to yield protocatechuate (PCA). The chain is 1,2-dihydroxy-3,5-cyclohexadiene-1,4-dicarboxylate dehydrogenase (tphBI) from Comamonas sp.